Consider the following 393-residue polypeptide: Dual specificity mitogen-activated protein kinase kinase 1 (393 aa).

Residues 1–27 (MPKKKPTPIQLNPAPDGSAVNGTSSAE) form a disordered region. Residues 68-361 (FEKISELGAG…LKQLMVHAFI (294 aa)) enclose the Protein kinase domain. Residues 74–82 (LGAGNGGVV) and K97 each bind ATP. D190 functions as the Proton acceptor in the catalytic mechanism. 2 positions are modified to phosphoserine; by RAF: S218 and S222. The interval 270–307 (ELELMFGCQVEGDAAETPPRPRTPGRPLSSYGMDSRPP) is RAF1-binding. T286 is subject to Phosphothreonine. Residue T292 is modified to Phosphothreonine; by MAPK1. At S298 the chain carries Phosphoserine; by PAK.

This sequence belongs to the protein kinase superfamily. STE Ser/Thr protein kinase family. MAP kinase kinase subfamily. In terms of assembly, found in a complex with at least BRAF, HRAS, MAP2K1, MAPK3/ERK1 and RGS14. Forms a heterodimer with MAP2K2/MEK2. Forms heterodimers with KSR2 which further dimerize to form tetramers. Interacts with KSR1 or KSR2 and BRAF; the interaction with KSR1 or KSR2 mediates KSR1-BRAF or KSR2-BRAF dimerization. Interacts with ARBB2, LAMTOR3, MAPK1/ERK2 and RAF1. Interacts with MAPK1/ERK2. Interacts with MORG1. Interacts with PPARG. Interacts with isoform 1 of VRK2. Interacts with SGK1. Interacts with BIRC6/bruce. Interacts with KAT7; the interaction promotes KAT7 phosphorylation. Interacts with RAF1 and NEK10; the interaction is required for ERK1/2-signaling pathway activation in response to UV irradiation. Interacts with TRAF3IP3. Interacts with MOS. In terms of processing, phosphorylation at Ser-218 and Ser-222 by MAP kinase kinase kinases (BRAF or MEKK1) positively regulates the kinase activity. Also phosphorylated at Thr-292 by MAPK1/ERK2 and at Ser-298 by PAK. MAPK1/ERK2 phosphorylation of Thr-292 occurs in response to cellular adhesion and leads to inhibition of Ser-298 phosphorylation by PAK. Autophosphorylated at Ser-218 and Ser-222, autophosphosphorylation is promoted by NEK10 following UV irradiation.

It is found in the cytoplasm. It localises to the cytoskeleton. The protein resides in the microtubule organizing center. Its subcellular location is the centrosome. The protein localises to the spindle pole body. It is found in the nucleus. It localises to the membrane. The enzyme catalyses L-seryl-[protein] + ATP = O-phospho-L-seryl-[protein] + ADP + H(+). The catalysed reaction is L-threonyl-[protein] + ATP = O-phospho-L-threonyl-[protein] + ADP + H(+). It carries out the reaction L-tyrosyl-[protein] + ATP = O-phospho-L-tyrosyl-[protein] + ADP + H(+). Ras proteins such as HRAS mediate the activation of RAF proteins such as RAF1 or BRAF which in turn activate extracellular signal-regulated kinases (ERK) through MAPK (mitogen-activated protein kinases) and ERK kinases MAP2K1/MEK1 and MAP2K2/MEK2. Activation occurs through phosphorylation of Ser-218 and Ser-222. MAP2K1/MEK1 binds KSR1 or KSR2 releasing the inhibitory intramolecular interaction between KSR1 or KSR2 protein kinase and N-terminal domains. This allows KSR1 or KSR2 dimerization with BRAF leading to BRAF activation and phosphorylation of MAP2K1. MAP2K1/MEK1 is also the target of negative feed-back regulation by its substrate kinases, such as MAPK1/ERK2. These phosphorylate MAP2K1/MEK1 on Thr-292, thereby facilitating dephosphorylation of the activating residues Ser-218 and Ser-222. Inhibited by serine/threonine phosphatase 2A. Its function is as follows. Dual specificity protein kinase which acts as an essential component of the MAP kinase signal transduction pathway. Binding of extracellular ligands such as growth factors, cytokines and hormones to their cell-surface receptors activates RAS and this initiates RAF1 activation. RAF1 then further activates the dual-specificity protein kinases MAP2K1/MEK1 and MAP2K2/MEK2. Both MAP2K1/MEK1 and MAP2K2/MEK2 function specifically in the MAPK/ERK cascade, and catalyze the concomitant phosphorylation of a threonine and a tyrosine residue in a Thr-Glu-Tyr sequence located in the extracellular signal-regulated kinases MAPK3/ERK1 and MAPK1/ERK2, leading to their activation and further transduction of the signal within the MAPK/ERK cascade. Activates BRAF in a KSR1 or KSR2-dependent manner; by binding to KSR1 or KSR2 releases the inhibitory intramolecular interaction between KSR1 or KSR2 protein kinase and N-terminal domains which promotes KSR1 or KSR2-BRAF dimerization and BRAF activation. Depending on the cellular context, this pathway mediates diverse biological functions such as cell growth, adhesion, survival and differentiation, predominantly through the regulation of transcription, metabolism and cytoskeletal rearrangements. One target of the MAPK/ERK cascade is peroxisome proliferator-activated receptor gamma (PPARG), a nuclear receptor that promotes differentiation and apoptosis. MAP2K1/MEK1 has been shown to export PPARG from the nucleus. The MAPK/ERK cascade is also involved in the regulation of endosomal dynamics, including lysosome processing and endosome cycling through the perinuclear recycling compartment (PNRC), as well as in the fragmentation of the Golgi apparatus during mitosis. The polypeptide is Dual specificity mitogen-activated protein kinase kinase 1 (MAP2K1) (Pan troglodytes (Chimpanzee)).